We begin with the raw amino-acid sequence, 107 residues long: High mobility group protein HMG-I/HMG-Y (107 aa).

Residues 1–107 (MSESSSKSSQ…ISQESSEEEQ (107 aa)) are disordered. Position 2 is an N-acetylserine (Ser-2). Lys-7 carries the N6-acetyllysine modification. Ser-8 is modified (ADP-ribosylserine). At Ser-9 the chain carries ADP-ribosylserine; alternate. Ser-9 is subject to Phosphoserine; alternate. Lys-15 carries the post-translational modification N6-acetyllysine; alternate. Residue Lys-15 forms a Glycyl lysine isopeptide (Lys-Gly) (interchain with G-Cter in SUMO2); alternate linkage. Residues 15–24 (KQEKDGTEKR) are compositionally biased toward basic and acidic residues. The a.T hook 1 DNA-binding region spans 21-31 (TEKRGRGRPRK). Asymmetric dimethylarginine; alternate is present on Arg-26. Arg-26 is subject to Omega-N-methylarginine; alternate. Position 26 is a symmetric dimethylarginine; alternate (Arg-26). Ser-36 carries the post-translational modification Phosphoserine; by HIPK2 and CDC2. Thr-39 carries the phosphothreonine modification. Phosphoserine occurs at positions 44 and 49. Thr-53 carries the post-translational modification Phosphothreonine; by HIPK2 and CDC2. 2 DNA-binding regions (a.T hook) span residues 53 to 63 (TPKRPRGRPKG) and 78 to 89 (APGRKPRGRPKK). The tract at residues 53 to 77 (TPKRPRGRPKGSKNKGAAKTRKATT) is interaction with HIPK2. Residues 55-74 (KRPRGRPKGSKNKGAAKTRK) are compositionally biased toward basic residues. Residues Arg-58 and Arg-60 each carry the asymmetric dimethylarginine; by PRMT6; alternate modification. Omega-N-methylarginine; by PRMT6; alternate is present on residues Arg-58 and Arg-60. Residues 93–107 (EEEEGISQESSEEEQ) show a composition bias toward acidic residues. 3 positions are modified to phosphoserine: Ser-99, Ser-102, and Ser-103.

It belongs to the HMGA family. In terms of assembly, interacts with HIPK2. In terms of processing, isoforms HMG-I and HMG-Y can be phosphorylated by HIPK2. Phosphorylation may modulate DNA-binding affinity. Post-translationally, methylation at Arg-58 is mutually exclusive with methylation at Arg-60.

It is found in the nucleus. The protein resides in the chromosome. HMG-I/Y bind preferentially to the minor groove of A+T rich regions in double-stranded DNA. It is suggested that these proteins could function in nucleosome phasing and in the 3'-end processing of mRNA transcripts. They are also involved in the transcription regulation of genes containing, or in close proximity to A+T-rich regions. The protein is High mobility group protein HMG-I/HMG-Y (HMGA1) of Cricetulus griseus (Chinese hamster).